A 213-amino-acid chain; its full sequence is Uracil phosphoribosyltransferase (213 aa).

5-phospho-alpha-D-ribose 1-diphosphate-binding positions include Arg-77, Arg-102, and 129-137; that span reads DPMLATGGS. Residues Ile-198 and 203–205 contribute to the uracil site; that span reads GDA. Asp-204 is a binding site for 5-phospho-alpha-D-ribose 1-diphosphate.

Belongs to the UPRTase family. The cofactor is Mg(2+).

The enzyme catalyses UMP + diphosphate = 5-phospho-alpha-D-ribose 1-diphosphate + uracil. It functions in the pathway pyrimidine metabolism; UMP biosynthesis via salvage pathway; UMP from uracil: step 1/1. With respect to regulation, allosterically activated by GTP. Catalyzes the conversion of uracil and 5-phospho-alpha-D-ribose 1-diphosphate (PRPP) to UMP and diphosphate. In Mycobacteroides abscessus (strain ATCC 19977 / DSM 44196 / CCUG 20993 / CIP 104536 / JCM 13569 / NCTC 13031 / TMC 1543 / L948) (Mycobacterium abscessus), this protein is Uracil phosphoribosyltransferase.